The chain runs to 353 residues: Rhodopsin (353 aa).

Topologically, residues 1 to 36 (MNGTEGPYFYIPMLNTTGIVRSPYEYPQYYLVNPAA) are extracellular. Asn2 and Asn15 each carry an N-linked (GlcNAc...) asparagine glycan. The chain crosses the membrane as a helical span at residues 37–61 (YAALCAYMFLLILLGFPINFLTLYV). Residues 62–73 (TIEHKKLRTPLN) are Cytoplasmic-facing. The chain crosses the membrane as a helical span at residues 74–96 (YILLNLAVANLFMVFGGFTTTMY). Topologically, residues 97-110 (TSMHGYFVLGRLGC) are extracellular. Cys110 and Cys187 are disulfide-bonded. A helical transmembrane segment spans residues 111–133 (NLEGFFATLGGEIGLWSLVVLAV). Positions 134–136 (ERW) match the 'Ionic lock' involved in activated form stabilization motif. The Cytoplasmic portion of the chain corresponds to 134 to 152 (ERWMVVCKPISNFRFTENH). The chain crosses the membrane as a helical span at residues 153–173 (AIMGLGFTWFAASACAVPPLV). The Extracellular segment spans residues 174–202 (GWSRYIPEGMQCSCGVDYYTRAEGFNNES). The N-linked (GlcNAc...) asparagine glycan is linked to Asn200. The helical transmembrane segment at 203–224 (FVVYMFVCHFLIPLIVVFFCYG) threads the bilayer. Over 225 to 252 (RLLCAVKEAAAAQQESETTQRAEREVTR) the chain is Cytoplasmic. The chain crosses the membrane as a helical span at residues 253–274 (MVVIMVIAFLICWCPYAGVAWY). Over 275-286 (IFSNQGSEFGPL) the chain is Extracellular. Residues 287 to 308 (FMTIPAFFAKSSSIYNPLIYIF) traverse the membrane as a helical segment. Lys296 carries the post-translational modification N6-(retinylidene)lysine. The Cytoplasmic segment spans residues 309–353 (MNKQFRHCMITTLCCGKNPFEEEEGSTTTSKTEASSASSSSVSPA). S-palmitoyl cysteine attachment occurs at residues Cys322 and Cys323. The interval 329–353 (EEEEGSTTTSKTEASSASSSSVSPA) is disordered. Positions 334–353 (STTTSKTEASSASSSSVSPA) are enriched in low complexity.

It belongs to the G-protein coupled receptor 1 family. Opsin subfamily. Phosphorylated on some or all of the serine and threonine residues present in the C-terminal region. Post-translationally, contains one covalently linked retinal chromophore.

It is found in the membrane. It localises to the cell projection. The protein localises to the cilium. Its subcellular location is the photoreceptor outer segment. Photoreceptor required for image-forming vision at low light intensity. While most salt water fish species use retinal as chromophore, most freshwater fish use 3-dehydroretinal, or a mixture of retinal and 3-dehydroretinal. Light-induced isomerization of 11-cis to all-trans retinal triggers a conformational change that activates signaling via G-proteins. Subsequent receptor phosphorylation mediates displacement of the bound G-protein alpha subunit by arrestin and terminates signaling. In Solea solea (Common sole), this protein is Rhodopsin (rho).